The chain runs to 575 residues: Inactive terpenoid synthase 20, chloroplastic (575 aa).

Residues 1–52 (MEAITKNGSLSQTLVHCGPKSLSSFIPVRCLRFSKNPFPKKLVVTRARTSIN) constitute a chloroplast transit peptide. Mg(2+)-binding residues include Asp332, Asp336, Asp474, Thr478, and Glu482. A DDXXD motif motif is present at residues 332–336 (DDLYD).

The protein belongs to the terpene synthase family. Tpsa subfamily. Predominantly expressed in roots but also in leaves and stems.

The protein resides in the plastid. It localises to the chloroplast. Its function is as follows. Does not possess diterpene synthase activity. This is Inactive terpenoid synthase 20, chloroplastic from Arabidopsis thaliana (Mouse-ear cress).